A 358-amino-acid chain; its full sequence is Heme A synthase (358 aa).

Transmembrane regions (helical) follow at residues 25–45, 111–131, 141–161, 176–196, 210–230, 269–289, 304–324, and 326–346; these read LVRY…MVGG, LLAR…WLTG, MLGL…MVAS, IHLT…RGLV, FAGW…LVAG, VQFV…LHAV, TIVL…TLLM, and APLH…AFAV. His-273 contacts heme. His-334 is a binding site for heme.

Belongs to the COX15/CtaA family. Type 2 subfamily. As to quaternary structure, interacts with CtaB. It depends on heme b as a cofactor.

The protein resides in the cell membrane. It catalyses the reaction Fe(II)-heme o + 2 A + H2O = Fe(II)-heme a + 2 AH2. It functions in the pathway porphyrin-containing compound metabolism; heme A biosynthesis; heme A from heme O: step 1/1. Its function is as follows. Catalyzes the conversion of heme O to heme A by two successive hydroxylations of the methyl group at C8. The first hydroxylation forms heme I, the second hydroxylation results in an unstable dihydroxymethyl group, which spontaneously dehydrates, resulting in the formyl group of heme A. The chain is Heme A synthase from Brucella abortus (strain S19).